Reading from the N-terminus, the 147-residue chain is Large ribosomal subunit protein uL22c (147 aa).

It belongs to the universal ribosomal protein uL22 family. Part of the 50S ribosomal subunit.

It localises to the plastid. Its function is as follows. This protein binds specifically to 23S rRNA. Functionally, the globular domain of the protein is located near the polypeptide exit tunnel on the outside of the subunit, while an extended beta-hairpin is found that lines the wall of the exit tunnel in the center of the 70S ribosome. This Cuscuta gronovii (Common dodder) protein is Large ribosomal subunit protein uL22c (rpl22).